The chain runs to 145 residues: Meiotically up-regulated gene 124 protein (145 aa).

2 helical membrane passes run 18 to 38 (IILT…CPSI) and 95 to 115 (FAWS…NFFL).

The protein resides in the membrane. Has a role in meiosis. The sequence is that of Meiotically up-regulated gene 124 protein (mug124) from Schizosaccharomyces pombe (strain 972 / ATCC 24843) (Fission yeast).